A 116-amino-acid chain; its full sequence is T cell receptor alpha variable 19 (116 aa).

An N-terminal signal peptide occupies residues 1–21; it reads MLTASLLRAVIASICVVSSMA. The region spanning 22 to 116 is the Ig-like domain; sequence QKVTQAQTEI…SAVYFCALSE (95 aa). A disulfide bridge connects residues cysteine 43 and cysteine 112. Asparagine 96 carries N-linked (GlcNAc...) asparagine glycosylation.

As to quaternary structure, alpha-beta TR is a heterodimer composed of an alpha and beta chain; disulfide-linked. The alpha-beta TR is associated with the transmembrane signaling CD3 coreceptor proteins to form the TR-CD3 (TcR or TCR). The assembly of alpha-beta TR heterodimers with CD3 occurs in the endoplasmic reticulum where a single alpha-beta TR heterodimer associates with one CD3D-CD3E heterodimer, one CD3G-CD3E heterodimer and one CD247 homodimer forming a stable octameric structure. CD3D-CD3E and CD3G-CD3E heterodimers preferentially associate with TR alpha and TR beta chains, respectively. The association of the CD247 homodimer is the last step of TcR assembly in the endoplasmic reticulum and is required for transport to the cell surface.

The protein resides in the cell membrane. V region of the variable domain of T cell receptor (TR) alpha chain that participates in the antigen recognition. Alpha-beta T cell receptors are antigen specific receptors which are essential to the immune response and are present on the cell surface of T lymphocytes. Recognize peptide-major histocompatibility (MH) (pMH) complexes that are displayed by antigen presenting cells (APC), a prerequisite for efficient T cell adaptive immunity against pathogens. Binding of alpha-beta TR to pMH complex initiates TR-CD3 clustering on the cell surface and intracellular activation of LCK that phosphorylates the ITAM motifs of CD3G, CD3D, CD3E and CD247 enabling the recruitment of ZAP70. In turn ZAP70 phosphorylates LAT, which recruits numerous signaling molecules to form the LAT signalosome. The LAT signalosome propagates signal branching to three major signaling pathways, the calcium, the mitogen-activated protein kinase (MAPK) kinase and the nuclear factor NF-kappa-B (NF-kB) pathways, leading to the mobilization of transcription factors that are critical for gene expression and essential for T cell growth and differentiation. The T cell repertoire is generated in the thymus, by V-(D)-J rearrangement. This repertoire is then shaped by intrathymic selection events to generate a peripheral T cell pool of self-MH restricted, non-autoaggressive T cells. Post-thymic interaction of alpha-beta TR with the pMH complexes shapes TR structural and functional avidity. The chain is T cell receptor alpha variable 19 from Homo sapiens (Human).